The chain runs to 242 residues: DNA repair protein RecO (242 aa).

Belongs to the RecO family. In terms of assembly, monomer.

Involved in DNA repair and RecF pathway recombination. This is DNA repair protein RecO from Salmonella enteritidis PT4 (strain P125109).